The primary structure comprises 522 residues: BTB/POZ domain-containing protein 3 (522 aa).

One can recognise a BTB domain in the interval 120-190 (ADVHFVVGPP…IYCDEIDLAA (71 aa)). The region spanning 235–300 (FEEPDLTQRC…NWAEVECQRQ (66 aa)) is the BACK domain.

In terms of tissue distribution, strongly expressed in the primary visual cortex.

The protein localises to the cytoplasm. The protein resides in the cytosol. It localises to the nucleus. In terms of biological role, acts as a key regulator of dendritic field orientation during development of sensory cortex. Also directs dendrites toward active axon terminals when ectopically expressed. This chain is BTB/POZ domain-containing protein 3 (BTBD3), found in Callithrix jacchus (White-tufted-ear marmoset).